Here is a 153-residue protein sequence, read N- to C-terminus: MAHLVWQDDLNTGIQVIDNQHKRIVEMINLLHDAQQGKEHAAIAEVIEELVDYTLSHFAFEETLMEDAGYQFSRAHKKIHELFIRRVSEYRVRFQAGEDVGDELKGLLSRWLFNHIRNDDAGYVDAVRHSMSELVKDKSEGGWLSRSMKRFFG.

Residues histidine 21, histidine 57, glutamate 61, histidine 76, histidine 80, histidine 115, and aspartate 120 each contribute to the Fe cation site.

It belongs to the hemerythrin family. In terms of assembly, monomer.

Oxygen-binding protein. May be involved in a storage mechanism or for delivery to oxygen-requiring enzymes. The oxygen-binding site contains two iron atoms. The chain is Bacteriohemerythrin from Pseudomonas paraeruginosa (strain DSM 24068 / PA7) (Pseudomonas aeruginosa (strain PA7)).